Consider the following 337-residue polypeptide: Glyceraldehyde-3-phosphate dehydrogenase (337 aa).

Residues Arg17 to Ile18, Asp39, Lys83, and Ser125 each bind NAD(+). Residues Ser156–Thr158, Thr187, Arg202, Thr215–Gly216, and Arg238 contribute to the D-glyceraldehyde 3-phosphate site. The active-site Nucleophile is the Cys157. Asn319 contributes to the NAD(+) binding site.

Belongs to the glyceraldehyde-3-phosphate dehydrogenase family. In terms of assembly, homotetramer.

The protein localises to the cytoplasm. It catalyses the reaction D-glyceraldehyde 3-phosphate + phosphate + NAD(+) = (2R)-3-phospho-glyceroyl phosphate + NADH + H(+). It participates in carbohydrate degradation; glycolysis; pyruvate from D-glyceraldehyde 3-phosphate: step 1/5. Catalyzes the oxidative phosphorylation of glyceraldehyde 3-phosphate (G3P) to 1,3-bisphosphoglycerate (BPG) using the cofactor NAD. The first reaction step involves the formation of a hemiacetal intermediate between G3P and a cysteine residue, and this hemiacetal intermediate is then oxidized to a thioester, with concomitant reduction of NAD to NADH. The reduced NADH is then exchanged with the second NAD, and the thioester is attacked by a nucleophilic inorganic phosphate to produce BPG. This chain is Glyceraldehyde-3-phosphate dehydrogenase (gapA), found in Mycoplasma pneumoniae (strain ATCC 29342 / M129 / Subtype 1) (Mycoplasmoides pneumoniae).